The following is a 459-amino-acid chain: Argininosuccinate lyase (459 aa).

The protein belongs to the lyase 1 family. Argininosuccinate lyase subfamily.

The protein resides in the cytoplasm. The catalysed reaction is 2-(N(omega)-L-arginino)succinate = fumarate + L-arginine. It participates in amino-acid biosynthesis; L-arginine biosynthesis; L-arginine from L-ornithine and carbamoyl phosphate: step 3/3. This Lactococcus lactis subsp. cremoris (strain SK11) protein is Argininosuccinate lyase.